We begin with the raw amino-acid sequence, 300 residues long: N-acetylmuramic acid 6-phosphate etherase 2 (300 aa).

The region spanning 57 to 220 (ITAAFANGGR…TTGAMIRSGK (164 aa)) is the SIS domain. The active-site Proton donor is Glu-85. Glu-116 is a catalytic residue.

The protein belongs to the GCKR-like family. MurNAc-6-P etherase subfamily. In terms of assembly, homodimer.

It catalyses the reaction N-acetyl-D-muramate 6-phosphate + H2O = N-acetyl-D-glucosamine 6-phosphate + (R)-lactate. Its pathway is amino-sugar metabolism; 1,6-anhydro-N-acetylmuramate degradation. It functions in the pathway amino-sugar metabolism; N-acetylmuramate degradation. The protein operates within cell wall biogenesis; peptidoglycan recycling. Functionally, specifically catalyzes the cleavage of the D-lactyl ether substituent of MurNAc 6-phosphate, producing GlcNAc 6-phosphate and D-lactate. Together with AnmK, is also required for the utilization of anhydro-N-acetylmuramic acid (anhMurNAc) either imported from the medium or derived from its own cell wall murein, and thus plays a role in cell wall recycling. The protein is N-acetylmuramic acid 6-phosphate etherase 2 of Vibrio parahaemolyticus serotype O3:K6 (strain RIMD 2210633).